The chain runs to 246 residues: UPF0736 protein GK0808 (246 aa).

This sequence belongs to the UPF0736 family.

The polypeptide is UPF0736 protein GK0808 (Geobacillus kaustophilus (strain HTA426)).